The following is a 282-amino-acid chain: 4-deoxy-L-threo-5-hexosulose-uronate ketol-isomerase 2 (282 aa).

Zn(2+) is bound by residues histidine 200, histidine 202, glutamate 207, and histidine 249.

The protein belongs to the KduI family. It depends on Zn(2+) as a cofactor.

The enzyme catalyses 5-dehydro-4-deoxy-D-glucuronate = 3-deoxy-D-glycero-2,5-hexodiulosonate. Its pathway is glycan metabolism; pectin degradation; 2-dehydro-3-deoxy-D-gluconate from pectin: step 4/5. Its function is as follows. Catalyzes the isomerization of 5-dehydro-4-deoxy-D-glucuronate to 3-deoxy-D-glycero-2,5-hexodiulosonate. The protein is 4-deoxy-L-threo-5-hexosulose-uronate ketol-isomerase 2 (kduI2) of Rhizobium meliloti (strain 1021) (Ensifer meliloti).